Consider the following 330-residue polypeptide: MSRQTDMDPGTYVPDIGGLRFWDMWKEVVFVFVNDTKQKHGGGSETGAGAFFPQYSKYPAMAARSKTKFLGELLILSRFHKYNPVFTTFAGDRTISTAFVFQQTALCVLAAYLFCGAGMVWNDWIDRDIDAKVARTKHRPLAMGSVTTTEAMVWMTLQVIMSWGVLRVMLDNKDVLKHLIPVMVASVLYPFGKRYLARKLMIYPQYILAFTIAWPAIPGRAAICGRHESFTETTRQCLPLCIMVFFWTIYLNTAYSYQDVVDDRKLKVNSFYNIAGNHIHVLLVLLVSPIILAQFDPKQPASGGTLHKSNFILGVWTILACAAEVFLTSA.

The N-linked (GlcNAc...) asparagine glycan is linked to Asn34. Helical transmembrane passes span 105–125, 146–166, 175–192, 199–219, 237–257, 273–293, and 310–330; these read ALCV…NDWI, VTTT…WGVL, VLKH…YPFG, KLMI…AIPG, CLPL…AYSY, NIAG…IILA, and NFIL…LTSA.

This sequence belongs to the UbiA prenyltransferase family. Requires Mg(2+) as cofactor.

It is found in the membrane. The protein operates within secondary metabolite biosynthesis; terpenoid biosynthesis. Polyprenyl transferase; part of the gene cluster that mediates the biosynthesis of diterpenoid pyrones. The first step of the pathway is the synthesis of the alpha-pyrone moiety by the polyketide synthase dpfgA via condensation of one acetyl-CoA starter unit with 3 malonyl-CoA units and 2 methylations. The alpha-pyrone is then combined with geranylgeranyl pyrophosphate (GGPP) formed by the GGPP synthase dpfgD through the action of the prenyltransferase dpfgC to yield a linear alpha-pyrone diterpenoid. Subsequent steps in the diterpenoid pyrone biosynthetic pathway involve the decalin core formation, which is initiated by the epoxidation of the C10-C11 olefin by the FAD-dependent oxidoreductase dpfgE, and is followed by a cyclization cascade catalyzed by the terpene cyclase dpfgB. The short chain dehydrogenase/reductase dpfgG then oxidizes the 8S hydroxy group to a ketone and the short chain dehydrogenase/reductase dpfgH reduces the ketone to the 8R hydroxy group to yield higginsianin B. Higginsianin B is further methylated by the methyltransferase dpfgI to produce the intermediate named FDDP B. The cytochrome P450 monooxygenase dfgpJ then catalyzes a three-step oxidation at C-27 to generate a carboxylic acid as well as C-26 hydroxylation. Finally, methyltransferase dpfgK methylates the carboxylic acid generated by dpfgJ, yielding the final diterpenoid pyrones from the pathway which were named FDDP D and FDDP E. In Gibberella zeae (strain ATCC MYA-4620 / CBS 123657 / FGSC 9075 / NRRL 31084 / PH-1) (Wheat head blight fungus), this protein is Polyprenyl transferase dpfgC.